The primary structure comprises 167 residues: Transcription factor HES-5 (167 aa).

Residues Lys-16–Ser-72 enclose the bHLH domain. One can recognise an Orange domain in the interval Tyr-88–Phe-119. Over residues Ala-124–Ala-138 the composition is skewed to pro residues. Residues Ala-124 to Trp-167 are disordered. Residues Pro-139–Ala-160 show a composition bias toward low complexity. The WRPW motif signature appears at Trp-164–Trp-167.

Transcription repression requires formation of a complex with a corepressor protein of the Groucho/TLE family.

It is found in the nucleus. Its function is as follows. Transcriptional repressor of genes that require a bHLH protein for their transcription. Plays an important role as neurogenesis negative regulator. This chain is Transcription factor HES-5 (Hes5), found in Mus musculus (Mouse).